Here is a 152-residue protein sequence, read N- to C-terminus: Protein NrdI (152 aa).

The protein belongs to the NrdI family.

Its function is as follows. Probably involved in ribonucleotide reductase function. This chain is Protein NrdI, found in Rhodococcus opacus (strain B4).